The following is a 447-amino-acid chain: MREIVHLQTGQCGNQIGAAFWQTISGEHGLDGSGVYNGTSDLQLERMNVYFNEASGNKYVPRAVLVDLEPGTMDAVRAGPXGQLFRPDNFVFGQSGAGNNWAKGHYTEGAELVDQVLDVVRREAEGCDCLQGFQITHSLGGGTGAGMGTLLISKIREEFPDRMMATFSVMPSPKVSDTVVEPYNATLSVHQLVENSDATFCIDNEALYDICMRTLKLNNPSYGDLNHLVSAVMSGVTTCLRFPGQLNSDLRKLAVNMVPFPRLHFFMVGFAPLTSRGAHSFRAVTVPELTQQIFDPKNMMAASDFRNGRYLTCSAIYRGKVSMKEVEDQIRNVQNKNTAYFVEWIPNNVQTALCSIPPRGLKMSSTFVGNSTSIQELFKRVGDQFTAMFRRKAFLHWYTGEGMDEMEFTEAESNMNDLVSEYQQYQEASVSEGEEEYDEEAPLEGEE.

8 residues coordinate GTP: Q11, E69, S138, G142, T143, G144, N204, and N226. E69 contributes to the Mg(2+) binding site. The interval 424–447 (QYQEASVSEGEEEYDEEAPLEGEE) is disordered. Residues 432-447 (EGEEEYDEEAPLEGEE) show a composition bias toward acidic residues.

Belongs to the tubulin family. In terms of assembly, dimer of alpha and beta chains. A typical microtubule is a hollow water-filled tube with an outer diameter of 25 nm and an inner diameter of 15 nM. Alpha-beta heterodimers associate head-to-tail to form protofilaments running lengthwise along the microtubule wall with the beta-tubulin subunit facing the microtubule plus end conferring a structural polarity. Microtubules usually have 13 protofilaments but different protofilament numbers can be found in some organisms and specialized cells. The cofactor is Mg(2+).

The protein resides in the cytoplasm. It is found in the cytoskeleton. In terms of biological role, tubulin is the major constituent of microtubules, a cylinder consisting of laterally associated linear protofilaments composed of alpha- and beta-tubulin heterodimers. Microtubules grow by the addition of GTP-tubulin dimers to the microtubule end, where a stabilizing cap forms. Below the cap, tubulin dimers are in GDP-bound state, owing to GTPase activity of alpha-tubulin. This is Tubulin beta chain (TUB1) from Cercospora beticola (Sugarbeet leaf spot fungus).